Consider the following 64-residue polypeptide: Large ribosomal subunit protein bL32 (64 aa).

The interval 1–35 (MAVQKSRVTPSRRGMRRAHDALSAKQLSTDPTTGE) is disordered.

The protein belongs to the bacterial ribosomal protein bL32 family.

The sequence is that of Large ribosomal subunit protein bL32 from Stenotrophomonas maltophilia (strain R551-3).